We begin with the raw amino-acid sequence, 173 residues long: Small ribosomal subunit protein uS5 (173 aa).

The region spanning 17 to 80 (LREKMIAVNR…EEARRNMVKV (64 aa)) is the S5 DRBM domain.

Belongs to the universal ribosomal protein uS5 family. Part of the 30S ribosomal subunit. Contacts proteins S4 and S8.

Its function is as follows. With S4 and S12 plays an important role in translational accuracy. In terms of biological role, located at the back of the 30S subunit body where it stabilizes the conformation of the head with respect to the body. In Acidovorax sp. (strain JS42), this protein is Small ribosomal subunit protein uS5.